An 85-amino-acid polypeptide reads, in one-letter code: UPF0297 protein lhv_0439 (85 aa).

Belongs to the UPF0297 family.

This Lactobacillus helveticus (strain DPC 4571) protein is UPF0297 protein lhv_0439.